A 348-amino-acid chain; its full sequence is Protein RecA (348 aa).

66 to 73 contacts ATP; sequence GPESSGKT.

This sequence belongs to the RecA family.

It is found in the cytoplasm. Can catalyze the hydrolysis of ATP in the presence of single-stranded DNA, the ATP-dependent uptake of single-stranded DNA by duplex DNA, and the ATP-dependent hybridization of homologous single-stranded DNAs. It interacts with LexA causing its activation and leading to its autocatalytic cleavage. The polypeptide is Protein RecA (Legionella pneumophila).